The primary structure comprises 264 residues: AA9 family lytic polysaccharide monooxygenase A (264 aa).

The first 18 residues, 1–18 (MHFAALAILSSLVASAAA), serve as a signal peptide directing secretion. Histidine 19 contacts Cu(2+). N-linked (GlcNAc...) asparagine glycosylation is found at asparagine 51 and asparagine 75. A disulfide bridge links cysteine 59 with cysteine 182. Residue histidine 96 participates in Cu(2+) binding. An N-linked (GlcNAc...) asparagine glycan is attached at asparagine 110. Histidine 162 is an O2 binding site. Tyrosine 179 provides a ligand contact to Cu(2+). N-linked (GlcNAc...) asparagine glycans are attached at residues asparagine 218 and asparagine 251.

The protein belongs to the polysaccharide monooxygenase AA9 family. Requires Cu(2+) as cofactor.

The protein localises to the secreted. It catalyses the reaction [(1-&gt;4)-beta-D-glucosyl]n+m + reduced acceptor + O2 = 4-dehydro-beta-D-glucosyl-[(1-&gt;4)-beta-D-glucosyl]n-1 + [(1-&gt;4)-beta-D-glucosyl]m + acceptor + H2O.. Lytic polysaccharide monooxygenase (LPMO) that depolymerizes crystalline and amorphous polysaccharides via the oxidation of scissile alpha- or beta-(1-4)-glycosidic bonds, yielding C4 oxidation products. Catalysis by LPMOs requires the reduction of the active-site copper from Cu(II) to Cu(I) by a reducing agent and H(2)O(2) or O(2) as a cosubstrate. Active on cellulose and cello-oligosaccharides, as well as plant cell wall-derived hemicellulosic polysaccharides. Also active on cello-oligosaccharides such as cellohexaose, cellopentaose or cellotetraose. The sequence is that of AA9 family lytic polysaccharide monooxygenase A from Phanerochaete carnosa (strain HHB-10118-sp) (White-rot fungus).